The following is a 427-amino-acid chain: Peptidase B (427 aa).

Residues Lys195 and Asp200 each coordinate Mn(2+). Residue Lys207 is part of the active site. The Mn(2+) site is built by Asp218, Asp277, and Glu279. Residue Arg281 is part of the active site.

Belongs to the peptidase M17 family. As to quaternary structure, homohexamer. Mn(2+) is required as a cofactor.

It is found in the cytoplasm. It catalyses the reaction Release of an N-terminal amino acid, Xaa, from a peptide or arylamide. Xaa is preferably Glu or Asp but may be other amino acids, including Leu, Met, His, Cys and Gln.. Its function is as follows. Probably plays an important role in intracellular peptide degradation. The protein is Peptidase B of Escherichia fergusonii (strain ATCC 35469 / DSM 13698 / CCUG 18766 / IAM 14443 / JCM 21226 / LMG 7866 / NBRC 102419 / NCTC 12128 / CDC 0568-73).